Reading from the N-terminus, the 123-residue chain is MLFHLSGLYSALYFLATLLMIVYKSQVFSYPCNCLALDLVLLLLMGILKVAQLYLGTKGNLMEAEVPLAASLAFTAVGGLLSVHFLLWQTLVLWMDSVLSTVLLVLHGLEAGLQVVVIADFIR.

The next 4 helical transmembrane spans lie at 2-22 (LFHL…LMIV), 35-55 (LALD…QLYL), 68-88 (LAAS…FLLW), and 102-122 (VLLV…ADFI).

The protein localises to the membrane. It localises to the cell projection. It is found in the cilium. This Mus musculus (Mouse) protein is Transmembrane protein 80 (Tmem80).